Reading from the N-terminus, the 159-residue chain is 4-deoxy-4-sulfo-D-erythrose isomerase (159 aa).

Cysteine 66 serves as the catalytic Proton acceptor.

Belongs to the LacAB/RpiB family.

It carries out the reaction 4-deoxy-4-sulfo-D-erythrose = 4-deoxy-4-sulfo-D-erythrulose. In terms of biological role, part of the sulfo-TK pathway, a D-sulfoquinovose degradation pathway that produces 2-hydroxyethane-1-sulfonate (isethionate). Catalyzes the isomerization of 4-deoxy-4-sulfo-D-erythrose (SE) to 4-deoxy-4-sulfo-D-erythrulose (SEu). In Clostridium sp. (strain MSTE9), this protein is 4-deoxy-4-sulfo-D-erythrose isomerase.